Here is an 806-residue protein sequence, read N- to C-terminus: Leucine--tRNA ligase (806 aa).

Residues 54–64 (SYPSGDLHMGH) carry the 'HIGH' region motif. The 'KMSKS' region motif lies at 571-575 (KMSKS). Lysine 574 is a binding site for ATP.

It belongs to the class-I aminoacyl-tRNA synthetase family.

The protein resides in the cytoplasm. It catalyses the reaction tRNA(Leu) + L-leucine + ATP = L-leucyl-tRNA(Leu) + AMP + diphosphate. The polypeptide is Leucine--tRNA ligase (Tropheryma whipplei (strain Twist) (Whipple's bacillus)).